The following is a 45-amino-acid chain: Somatoliberin (45 aa).

It belongs to the glucagon family.

Its subcellular location is the secreted. Functionally, GRF is released by the hypothalamus and acts on the adenohypophyse to stimulate the secretion of growth hormone. In Cyprinus carpio (Common carp), this protein is Somatoliberin (ghrh).